The sequence spans 249 residues: Coproheme decarboxylase (249 aa).

Fe-coproporphyrin III contacts are provided by residues arginine 131, 145-149 (YPMNK), histidine 172, glutamine 185, and serine 223. Residue tyrosine 145 is part of the active site.

Belongs to the ChdC family. Type 1 subfamily. Requires Fe-coproporphyrin III as cofactor.

The catalysed reaction is Fe-coproporphyrin III + 2 H2O2 + 2 H(+) = heme b + 2 CO2 + 4 H2O. It catalyses the reaction Fe-coproporphyrin III + H2O2 + H(+) = harderoheme III + CO2 + 2 H2O. It carries out the reaction harderoheme III + H2O2 + H(+) = heme b + CO2 + 2 H2O. Its pathway is porphyrin-containing compound metabolism; protoheme biosynthesis. Involved in coproporphyrin-dependent heme b biosynthesis. Catalyzes the decarboxylation of Fe-coproporphyrin III (coproheme) to heme b (protoheme IX), the last step of the pathway. The reaction occurs in a stepwise manner with a three-propionate intermediate. This is Coproheme decarboxylase from Thermus thermophilus (strain ATCC BAA-163 / DSM 7039 / HB27).